Here is a 97-residue protein sequence, read N- to C-terminus: Cytochrome c2 iso-2 (97 aa).

Residues cysteine 10, cysteine 13, histidine 14, and methionine 75 each contribute to the heme c site.

This sequence belongs to the cytochrome c family. In terms of processing, binds 1 heme c group covalently per subunit.

Cytochrome c2 is found mainly in purple, non-sulfur, photosynthetic bacteria where it functions as the electron donor to the oxidized bacteriochlorophyll in the photophosphorylation pathway. However, it may also have a role in the respiratory chain and is found in some non-photosynthetic bacteria. In Magnetospirillum molischianum (Rhodospirillum molischianum), this protein is Cytochrome c2 iso-2.